The sequence spans 200 residues: LexA repressor (200 aa).

A DNA-binding region (H-T-H motif) is located at residues 28-48; it reads RAEIAEILGFKSANAAEEHLK. Active-site for autocatalytic cleavage activity residues include S118 and K155.

Belongs to the peptidase S24 family. Homodimer.

The enzyme catalyses Hydrolysis of Ala-|-Gly bond in repressor LexA.. Its function is as follows. Represses a number of genes involved in the response to DNA damage (SOS response), including recA and lexA. In the presence of single-stranded DNA, RecA interacts with LexA causing an autocatalytic cleavage which disrupts the DNA-binding part of LexA, leading to derepression of the SOS regulon and eventually DNA repair. The sequence is that of LexA repressor from Teredinibacter turnerae (strain ATCC 39867 / T7901).